Reading from the N-terminus, the 445-residue chain is MIKIKRGLDLPISGAPEQRIEAARPVRSVALIGFDYHGMKPTMAVQVGDRVKLGQVLFTDKKNPSVSYTAPGAGVVSAIHRGEKRVLQSVVIDLDGDEQLEFARYPADKLATLSAEQVRDNLLQSGLWTALRTRPFSKVPDPESSPSSIFVTAIDTQPLAADPQVVIAEQGEAFQAGLTVLGRLARVFLCKAEGVSLPGEALSGVTAQAFSGPHPAGLPGTHIHFLDPVGAGKSVWNLNYQDVIAIGKLFTTGQLWTERVIALAGPVVEKPRLVRTRLGANLDELAAGQLQPGNNRLISGSVLGGRTAHGAYAYLGRYHLQLSCLKEGDQREFLHYLRAGVEKHSLLNVFVSRLLGGKRFAFTTSTNGSPRAMVPVGNYEAVMPLDILPTQLLRYLIVGDTEMAQKLGALELDEEDLALCSYVCAGKYEYGPILRDNLARIEQEG.

The protein belongs to the NqrA family. As to quaternary structure, composed of six subunits; NqrA, NqrB, NqrC, NqrD, NqrE and NqrF.

The enzyme catalyses a ubiquinone + n Na(+)(in) + NADH + H(+) = a ubiquinol + n Na(+)(out) + NAD(+). NQR complex catalyzes the reduction of ubiquinone-1 to ubiquinol by two successive reactions, coupled with the transport of Na(+) ions from the cytoplasm to the periplasm. NqrA to NqrE are probably involved in the second step, the conversion of ubisemiquinone to ubiquinol. The chain is Na(+)-translocating NADH-quinone reductase subunit A from Pseudomonas aeruginosa (strain ATCC 15692 / DSM 22644 / CIP 104116 / JCM 14847 / LMG 12228 / 1C / PRS 101 / PAO1).